Reading from the N-terminus, the 65-residue chain is Large ribosomal subunit protein bL35 (65 aa).

A compositionally biased stretch (basic residues) spans 1–16 (MPKMKTKSGAKKRFRV). A disordered region spans residues 1 to 25 (MPKMKTKSGAKKRFRVRPGGTVKRG).

Belongs to the bacterial ribosomal protein bL35 family.

This chain is Large ribosomal subunit protein bL35, found in Herminiimonas arsenicoxydans.